A 357-amino-acid chain; its full sequence is Beta-hexosaminidase (357 aa).

Residues aspartate 66, arginine 74, arginine 140, and 170–171 each bind substrate; that span reads KH. Catalysis depends on histidine 183, which acts as the Proton donor/acceptor. The Nucleophile role is filled by aspartate 254.

It belongs to the glycosyl hydrolase 3 family. NagZ subfamily.

It localises to the cytoplasm. It carries out the reaction Hydrolysis of terminal non-reducing N-acetyl-D-hexosamine residues in N-acetyl-beta-D-hexosaminides.. Its pathway is cell wall biogenesis; peptidoglycan recycling. Plays a role in peptidoglycan recycling by cleaving the terminal beta-1,4-linked N-acetylglucosamine (GlcNAc) from peptide-linked peptidoglycan fragments, giving rise to free GlcNAc, anhydro-N-acetylmuramic acid and anhydro-N-acetylmuramic acid-linked peptides. This chain is Beta-hexosaminidase, found in Chromobacterium violaceum (strain ATCC 12472 / DSM 30191 / JCM 1249 / CCUG 213 / NBRC 12614 / NCIMB 9131 / NCTC 9757 / MK).